The chain runs to 209 residues: High frequency lysogenization protein HflD homolog (209 aa).

Belongs to the HflD family.

Its subcellular location is the cytoplasm. The protein resides in the cell inner membrane. The polypeptide is High frequency lysogenization protein HflD homolog (Saccharophagus degradans (strain 2-40 / ATCC 43961 / DSM 17024)).